The sequence spans 368 residues: Ferredoxin--NADP reductase 2 (368 aa).

FAD is bound by residues Asp57, Gln65, Tyr70, Val110, Phe145, Asp310, and Thr351.

It belongs to the ferredoxin--NADP reductase type 2 family. Homodimer. The cofactor is FAD.

The catalysed reaction is 2 reduced [2Fe-2S]-[ferredoxin] + NADP(+) + H(+) = 2 oxidized [2Fe-2S]-[ferredoxin] + NADPH. The sequence is that of Ferredoxin--NADP reductase 2 from Cupriavidus pinatubonensis (strain JMP 134 / LMG 1197) (Cupriavidus necator (strain JMP 134)).